The following is a 240-amino-acid chain: Orotidine 5'-phosphate decarboxylase (240 aa).

Residues Asp12, Lys34, 62–71 (DMKLFDIGNT), Thr117, Arg180, Gln189, Gly209, and Arg210 contribute to the substrate site. Residue Lys64 is the Proton donor of the active site.

This sequence belongs to the OMP decarboxylase family. Type 1 subfamily. In terms of assembly, homodimer.

It carries out the reaction orotidine 5'-phosphate + H(+) = UMP + CO2. Its pathway is pyrimidine metabolism; UMP biosynthesis via de novo pathway; UMP from orotate: step 2/2. In terms of biological role, catalyzes the decarboxylation of orotidine 5'-monophosphate (OMP) to uridine 5'-monophosphate (UMP). This chain is Orotidine 5'-phosphate decarboxylase, found in Ruegeria pomeroyi (strain ATCC 700808 / DSM 15171 / DSS-3) (Silicibacter pomeroyi).